The chain runs to 178 residues: Large ribosomal subunit protein uL6 (178 aa).

This sequence belongs to the universal ribosomal protein uL6 family. Part of the 50S ribosomal subunit.

This protein binds to the 23S rRNA, and is important in its secondary structure. It is located near the subunit interface in the base of the L7/L12 stalk, and near the tRNA binding site of the peptidyltransferase center. This Lactiplantibacillus plantarum (strain ATCC BAA-793 / NCIMB 8826 / WCFS1) (Lactobacillus plantarum) protein is Large ribosomal subunit protein uL6.